A 393-amino-acid polypeptide reads, in one-letter code: MDAATLTYDTLRFAEFEDFPETSEPVWILGRKYSVLTEKDEILADVASRLWFTYRKNFPAIGGTGPTSDTGWGCMLRCGQMIFAQALVCRHLGRDWRWTQRKRQPDSYCSVLQAFLDRKDSCYSIHQIAQMGVGEGKSIGQWYGPNTVAQVLKKLAVFDTWSALAVHVAMDNTVVMADIRRLCRSSLPCAGAEAFPADSERHCNGFPAGAEGGGRAAPWRPLVLLIPLRLGLADVNAAYAGTLKHCFRMPQSLGVIGGKPNSAHYFIGYVGEELIYLDPHTTQPAVAAADRCPVPDESFHCQHPPGRMSIAELDPSIAVGFFCETEDDFNDWCQQVSKLSLLGGALPMFELVEQQPSHLACPDVLNLSLDSSDAERLERFFDSEDEDFEILSL.

Met1 is subject to N-acetylmethionine. Ser34 is modified (phosphoserine). The active-site Nucleophile is the Cys74. At Cys189 the chain carries S-nitrosocysteine. Active-site residues include Asp278 and His280. Cys292 and Cys301 each carry S-nitrosocysteine. A disulfide bridge links Cys292 with Cys361. 2 positions are modified to phosphoserine: Ser316 and Ser383. Positions 388 to 391 (FEIL) match the LIR motif. A Phosphoserine modification is found at Ser392.

It belongs to the peptidase C54 family. As to quaternary structure, interacts with PFKP; promoting phosphorylation of ATG4B at Ser-34. Interacts with GBP7. Phosphorylation at Ser-383 and Ser-392 promotes autophagy by increasing protein delipidation activity without affecting proteolytic activation of ATG8 proteins. Phosphorylation at Ser-316 by ULK1 inhibits autophagy by decreasing both proteolytic activation and delipidation activities. Phosphorylation at Ser-316 is dephosphorylated by protein phosphatase 2A (PP2A). Phosphorylation at Ser-34 by AKT2 promotes its hydrolase activity, leading to increased proteolytic activation and delipidation of ATG8 family proteins. Phosphorylation at Ser-34 by AKT1 promotes mitochondrial localization and inhibition of the F1F0-ATP synthase activity, leading to elevation of mitochondrial reactive oxygen species (ROS). In terms of processing, ubiquitinated by RNF5, leading to its degradation by the proteasome. Post-translationally, S-nitrosylation at Cys-189 and Cys-292 in response to high glucose decreases both proteolytic activation and delipidation activities. O-glycosylated by OGT, leading to increase protease activity, thereby promoting the proteolytic activation of ATG8 family proteins. In terms of processing, forms reversible intrachain disulfide bonds in response to oxidative stress. Forms interchain disulfide bonds, leading to formation of homooligomers in response to oxidation.

The protein resides in the cytoplasm. It is found in the cytosol. It localises to the cytoplasmic vesicle. Its subcellular location is the autophagosome. The protein localises to the endoplasmic reticulum. The protein resides in the mitochondrion. It carries out the reaction [protein]-C-terminal L-amino acid-glycyl-phosphatidylethanolamide + H2O = [protein]-C-terminal L-amino acid-glycine + a 1,2-diacyl-sn-glycero-3-phosphoethanolamine. The catalysed reaction is [protein]-C-terminal L-amino acid-glycyl-phosphatidylserine + H2O = [protein]-C-terminal L-amino acid-glycine + a 1,2-diacyl-sn-glycero-3-phospho-L-serine. Its activity is regulated as follows. Inhibited by N-ethylmaleimide. Redox-regulated during autophagy since reducing conditions activate ATG4A whereas an oxidizing environment such as the presence of H(2)O(2) inhibits its activity. The cysteine protease activity compounds is inhibited by styrylquinoline compounds 4-28 and LV-320. In terms of biological role, cysteine protease that plays a key role in autophagy by mediating both proteolytic activation and delipidation of ATG8 family proteins. Required for canonical autophagy (macroautophagy), non-canonical autophagy as well as for mitophagy. The protease activity is required for proteolytic activation of ATG8 family proteins: cleaves the C-terminal amino acid of ATG8 proteins MAP1LC3A, MAP1LC3B, MAP1LC3C, GABARAPL1, GABARAPL2 and GABARAP, to reveal a C-terminal glycine. Exposure of the glycine at the C-terminus is essential for ATG8 proteins conjugation to phosphatidylethanolamine (PE) and insertion to membranes, which is necessary for autophagy. Protease activity is also required to counteract formation of high-molecular weight conjugates of ATG8 proteins (ATG8ylation): acts as a deubiquitinating-like enzyme that removes ATG8 conjugated to other proteins, such as ATG3. In addition to the protease activity, also mediates delipidation of ATG8 family proteins. Catalyzes delipidation of PE-conjugated forms of ATG8 proteins during macroautophagy. Also involved in non-canonical autophagy, a parallel pathway involving conjugation of ATG8 proteins to single membranes at endolysosomal compartments, by catalyzing delipidation of ATG8 proteins conjugated to phosphatidylserine (PS). Compared to other members of the family (ATG4A, ATG4C or ATG4C), constitutes the major protein for proteolytic activation of ATG8 proteins, while it displays weaker delipidation activity than other ATG4 paralogs. Involved in phagophore growth during mitophagy independently of its protease activity and of ATG8 proteins: acts by regulating ATG9A trafficking to mitochondria and promoting phagophore-endoplasmic reticulum contacts during the lipid transfer phase of mitophagy. Its function is as follows. (Microbial infection) Mediates cleavage of an ATG8 protein homolog coded in the genome of cytopathogenic bovine viral diarrhea virus (BVDV). The protein is Cysteine protease ATG4B (ATG4B) of Bos taurus (Bovine).